The following is a 445-amino-acid chain: tRNA modification GTPase MnmE (445 aa).

Arginine 20, glutamate 79, and lysine 119 together coordinate (6S)-5-formyl-5,6,7,8-tetrahydrofolate. The region spanning 215–371 (GLKLAIVGPP…ILKNIENIAE (157 aa)) is the TrmE-type G domain. A K(+)-binding site is contributed by asparagine 225. Residues 225-230 (NTGKSS), 244-250 (SNIAGTT), and 269-272 (DTAG) each bind GTP. Residue serine 229 participates in Mg(2+) binding. Serine 244, isoleucine 246, and threonine 249 together coordinate K(+). A Mg(2+)-binding site is contributed by threonine 250. Lysine 445 is a binding site for (6S)-5-formyl-5,6,7,8-tetrahydrofolate.

It belongs to the TRAFAC class TrmE-Era-EngA-EngB-Septin-like GTPase superfamily. TrmE GTPase family. As to quaternary structure, homodimer. Heterotetramer of two MnmE and two MnmG subunits. Requires K(+) as cofactor.

It is found in the cytoplasm. Exhibits a very high intrinsic GTPase hydrolysis rate. Involved in the addition of a carboxymethylaminomethyl (cmnm) group at the wobble position (U34) of certain tRNAs, forming tRNA-cmnm(5)s(2)U34. In Rickettsia akari (strain Hartford), this protein is tRNA modification GTPase MnmE.